Consider the following 216-residue polypeptide: Ribonuclease HII (216 aa).

The RNase H type-2 domain maps to 28–216 (DIVCGVDEAG…PVRAALDLIR (189 aa)). Residues aspartate 34, glutamate 35, and aspartate 126 each coordinate a divalent metal cation.

It belongs to the RNase HII family. Requires Mn(2+) as cofactor. Mg(2+) serves as cofactor.

It localises to the cytoplasm. It catalyses the reaction Endonucleolytic cleavage to 5'-phosphomonoester.. Endonuclease that specifically degrades the RNA of RNA-DNA hybrids. The chain is Ribonuclease HII from Burkholderia vietnamiensis (strain G4 / LMG 22486) (Burkholderia cepacia (strain R1808)).